Reading from the N-terminus, the 1145-residue chain is Nucleolar protein 6 (1145 aa).

The tract at residues 1-46 (MQKKRNRAGPPQQEAASDDGEMSDSSDKMEVAQGKGKSAVKRAPDA) is disordered.

Belongs to the NRAP family. Part of the small subunit (SSU) processome, composed of more than 70 proteins and the RNA chaperone small nucleolar RNA (snoRNA) U3.

It is found in the nucleus. Its subcellular location is the nucleolus. The protein resides in the chromosome. In terms of biological role, part of the small subunit (SSU) processome, first precursor of the small eukaryotic ribosomal subunit. During the assembly of the SSU processome in the nucleolus, many ribosome biogenesis factors, an RNA chaperone and ribosomal proteins associate with the nascent pre-rRNA and work in concert to generate RNA folding, modifications, rearrangements and cleavage as well as targeted degradation of pre-ribosomal RNA by the RNA exosome. This chain is Nucleolar protein 6 (nol6), found in Xenopus tropicalis (Western clawed frog).